The chain runs to 295 residues: Protoheme IX farnesyltransferase (295 aa).

9 helical membrane-spanning segments follow: residues Ile9–Ala29, Phe36–Phe56, Leu80–Leu100, Leu108–Leu128, Gly135–Ser155, Leu163–Phe183, Ile209–Ala229, Gly230–Lys250, and Phe265–Val285.

It belongs to the UbiA prenyltransferase family. Protoheme IX farnesyltransferase subfamily.

The protein localises to the cell inner membrane. The enzyme catalyses heme b + (2E,6E)-farnesyl diphosphate + H2O = Fe(II)-heme o + diphosphate. It functions in the pathway porphyrin-containing compound metabolism; heme O biosynthesis; heme O from protoheme: step 1/1. Functionally, converts heme B (protoheme IX) to heme O by substitution of the vinyl group on carbon 2 of heme B porphyrin ring with a hydroxyethyl farnesyl side group. The sequence is that of Protoheme IX farnesyltransferase from Pseudomonas syringae pv. syringae (strain B728a).